A 146-amino-acid polypeptide reads, in one-letter code: Ribosome maturation factor RimP (146 aa).

Belongs to the RimP family.

Its subcellular location is the cytoplasm. Its function is as follows. Required for maturation of 30S ribosomal subunits. The polypeptide is Ribosome maturation factor RimP (Helicobacter pylori (strain ATCC 700392 / 26695) (Campylobacter pylori)).